Here is a 545-residue protein sequence, read N- to C-terminus: Probable zinc metalloprotease EGY2, chloroplastic (545 aa).

The N-terminal 63 residues, 1 to 63 (MQLPAMSCSP…QIRNRRFVCQ (63 aa)), are a transit peptide targeting the chloroplast. The segment at 66-142 (TETEPDGDGN…DATPASDAQE (77 aa)) is disordered. Residues 68 to 85 (TEPDGDGNGDEEKEELGD) show a composition bias toward acidic residues. Composition is skewed to polar residues over residues 88 to 109 (SSPSVYSVTQENGSAESETNAD) and 117 to 129 (NTEPLSSSDTVQN). The next 7 helical transmembrane spans lie at 256-276 (AVPEWFAAASFGVVTIFTLLL), 300-320 (VYGALVTAAIIGVHEIAHILA), 325-345 (GIKLAVPYFVPSWQIGSFGAI), 363-383 (AAGPLAGFSLGFVLLLLGFIL), 426-446 (PLVLWAWAGLLINAINSIPAG), 473-493 (LLGISALFNDVAFYWVVLIFF), and 513-533 (YISIGVAILLFGLLVCLPYPF).

Belongs to the peptidase M50B family.

It is found in the plastid. Its subcellular location is the chloroplast membrane. Its function is as follows. Probable membrane-associated metalloprotease that may be involved in chloroplast development. This is Probable zinc metalloprotease EGY2, chloroplastic (EGY2) from Oryza sativa subsp. indica (Rice).